Here is a 1392-residue protein sequence, read N- to C-terminus: DNA-directed RNA polymerase subunit beta (1392 aa).

Belongs to the RNA polymerase beta chain family. In terms of assembly, the RNAP catalytic core consists of 2 alpha, 1 beta, 1 beta' and 1 omega subunit. When a sigma factor is associated with the core the holoenzyme is formed, which can initiate transcription.

The catalysed reaction is RNA(n) + a ribonucleoside 5'-triphosphate = RNA(n+1) + diphosphate. In terms of biological role, DNA-dependent RNA polymerase catalyzes the transcription of DNA into RNA using the four ribonucleoside triphosphates as substrates. This is DNA-directed RNA polymerase subunit beta from Neisseria meningitidis serogroup B (strain ATCC BAA-335 / MC58).